A 235-amino-acid chain; its full sequence is Ribonuclease 3 (235 aa).

Residues 7–134 (LKDLQNKIEI…LIASIYLDKG (128 aa)) enclose the RNase III domain. Glu47 lines the Mg(2+) pocket. Asp51 is a catalytic residue. Mg(2+) is bound by residues Asp120 and Glu123. The active site involves Glu123. The DRBM domain maps to 161-230 (DYKTKLQEII…AKKAIENMEV (70 aa)).

Belongs to the ribonuclease III family. Homodimer. It depends on Mg(2+) as a cofactor.

The protein localises to the cytoplasm. The enzyme catalyses Endonucleolytic cleavage to 5'-phosphomonoester.. Functionally, digests double-stranded RNA. Involved in the processing of primary rRNA transcript to yield the immediate precursors to the large and small rRNAs (23S and 16S). Processes some mRNAs, and tRNAs when they are encoded in the rRNA operon. Processes pre-crRNA and tracrRNA of type II CRISPR loci if present in the organism. The sequence is that of Ribonuclease 3 from Clostridium tetani (strain Massachusetts / E88).